The following is a 330-amino-acid chain: Phenylalanine--tRNA ligase alpha subunit (330 aa).

Mg(2+) is bound at residue glutamate 254.

The protein belongs to the class-II aminoacyl-tRNA synthetase family. Phe-tRNA synthetase alpha subunit type 1 subfamily. As to quaternary structure, tetramer of two alpha and two beta subunits. Mg(2+) serves as cofactor.

It is found in the cytoplasm. It carries out the reaction tRNA(Phe) + L-phenylalanine + ATP = L-phenylalanyl-tRNA(Phe) + AMP + diphosphate + H(+). The polypeptide is Phenylalanine--tRNA ligase alpha subunit (pheS) (Neisseria meningitidis serogroup B (strain ATCC BAA-335 / MC58)).